A 245-amino-acid polypeptide reads, in one-letter code: tRNA (guanine-N(1)-)-methyltransferase (245 aa).

S-adenosyl-L-methionine-binding positions include Gly-113 and 133 to 138; that span reads IGDYVL.

Belongs to the RNA methyltransferase TrmD family. In terms of assembly, homodimer.

It localises to the cytoplasm. It carries out the reaction guanosine(37) in tRNA + S-adenosyl-L-methionine = N(1)-methylguanosine(37) in tRNA + S-adenosyl-L-homocysteine + H(+). Functionally, specifically methylates guanosine-37 in various tRNAs. This Oceanobacillus iheyensis (strain DSM 14371 / CIP 107618 / JCM 11309 / KCTC 3954 / HTE831) protein is tRNA (guanine-N(1)-)-methyltransferase.